The primary structure comprises 144 residues: IgW chain C region, secreted form 1/3 (144 aa).

The region spanning 1 to 82 (VYNQTTAVLG…AGSRFNDRIS (82 aa)) is the Ig-like domain. Asn-3, Asn-43, and Asn-123 each carry an N-linked (GlcNAc...) asparagine glycan. The cysteines at positions 11 and 68 are disulfide-linked. Residues 87–144 (KGGTINLPVPGGNTPCTCPPCSCSGCMPKLVYQTDLNVTLENGGQLQYNCHQQACKIK) are secretory tail.

Expressed mainly in lymphoid tissues including spleen, epigonal organ and circulating lymphocytes.

The protein resides in the secreted. This Heterodontus francisci (Horn shark) protein is IgW chain C region, secreted form 1/3.